The following is a 28-amino-acid chain: RDPTGCEVDQVIMVKRHGERYPSPSAGK.

The tract at residues 1-28 is disordered; sequence RDPTGCEVDQVIMVKRHGERYPSPSAGK. The active-site Nucleophile is the His-17.

This sequence belongs to the histidine acid phosphatase family.

It catalyses the reaction 1D-myo-inositol hexakisphosphate + H2O = 1D-myo-inositol 1,2,4,5,6-pentakisphosphate + phosphate. Its function is as follows. Catalyzes the hydrolysis of inorganic orthophosphate from phytate. This chain is 3-phytase B (phyB), found in Aspergillus ficuum.